The sequence spans 693 residues: Zinc finger BED domain-containing protein 5 (693 aa).

Residues 108 to 164 (RKYDESYLSFGFTYFGNRDAPHAQCVLCKKILSNSSLAPSKLRRHLETKHAAYKDKD) form a BED-type zinc finger. Zn(2+) contacts are provided by Cys-132, Cys-135, His-152, and His-157.

This is Zinc finger BED domain-containing protein 5 (ZBED5) from Homo sapiens (Human).